The following is a 279-amino-acid chain: Digeranylgeranylglyceryl phosphate synthase (279 aa).

A run of 8 helical transmembrane segments spans residues 5-25, 27-47, 90-110, 127-147, 148-168, 198-218, 219-239, and 259-279; these read GFFA…AIVA, LIAT…VLLV, FLLG…IALV, FFGN…GGAY, AGWH…LAML, KTAL…AVPY, LWWG…ILFA, and TLLK…AVFL.

Belongs to the UbiA prenyltransferase family. DGGGP synthase subfamily. Mg(2+) serves as cofactor.

It is found in the cell membrane. The catalysed reaction is sn-3-O-(geranylgeranyl)glycerol 1-phosphate + (2E,6E,10E)-geranylgeranyl diphosphate = 2,3-bis-O-(geranylgeranyl)-sn-glycerol 1-phosphate + diphosphate. The protein operates within membrane lipid metabolism; glycerophospholipid metabolism. In terms of biological role, prenyltransferase that catalyzes the transfer of the geranylgeranyl moiety of geranylgeranyl diphosphate (GGPP) to the C2 hydroxyl of (S)-3-O-geranylgeranylglyceryl phosphate (GGGP). This reaction is the second ether-bond-formation step in the biosynthesis of archaeal membrane lipids. The protein is Digeranylgeranylglyceryl phosphate synthase of Methanoregula boonei (strain DSM 21154 / JCM 14090 / 6A8).